The sequence spans 229 residues: GTP cyclohydrolase 1 (229 aa).

3 residues coordinate Zn(2+): cysteine 116, histidine 119, and cysteine 187.

It belongs to the GTP cyclohydrolase I family. In terms of assembly, toroid-shaped homodecamer, composed of two pentamers of five dimers.

It carries out the reaction GTP + H2O = 7,8-dihydroneopterin 3'-triphosphate + formate + H(+). The protein operates within cofactor biosynthesis; 7,8-dihydroneopterin triphosphate biosynthesis; 7,8-dihydroneopterin triphosphate from GTP: step 1/1. This chain is GTP cyclohydrolase 1, found in Synechococcus sp. (strain JA-3-3Ab) (Cyanobacteria bacterium Yellowstone A-Prime).